A 430-amino-acid polypeptide reads, in one-letter code: Putative FBD-associated F-box protein At5g56440 (430 aa).

The F-box domain maps to 1-49 (MDRISLLPDDVVFKILSFVPTKVVVSTNLLSKRWRYLWKHVPKLDYRDP). Positions 349–399 (QWEQPSSVPKCLISSLETVEWIDYKGREVEKKVVMYLLENSRQLKTMAIRS) constitute an FBD domain.

The protein is Putative FBD-associated F-box protein At5g56440 of Arabidopsis thaliana (Mouse-ear cress).